We begin with the raw amino-acid sequence, 481 residues long: PTS system N-acetylmuramic acid-specific EIIBC component (481 aa).

The region spanning 1–89 (MAKITQTMMA…NALIESGDNV (89 aa)) is the PTS EIIB type-1 domain. The active-site Phosphocysteine intermediate; for EIIB activity is cysteine 28. Positions 122-481 (SKFATIFTPL…FFGCKDVDLS (360 aa)) constitute a PTS EIIC type-1 domain. Transmembrane regions (helical) follow at residues 124–144 (FATI…LLGI), 165–185 (LVAY…ILIG), 190–210 (QAFG…VLGY), 225–245 (FFGF…AAIL), 263–283 (MILT…LIIM), 307–327 (AAIL…QGFV), 342–362 (LFPI…ALYA), 376–396 (GAII…VTLP), 406–426 (IGGA…LPVG), and 448–468 (IFAG…VGFA).

It localises to the cell inner membrane. The enzyme catalyses N-acetyl-beta-D-muramate(out) + N(pros)-phospho-L-histidyl-[protein] = N-acetyl-beta-D-muramate 6-phosphate(in) + L-histidyl-[protein]. Functionally, the phosphoenolpyruvate-dependent sugar phosphotransferase system (sugar PTS), a major carbohydrate active transport system, catalyzes the phosphorylation of incoming sugar substrates concomitantly with their translocation across the cell membrane. This system is involved in N-acetylmuramic acid (MurNAc) transport, yielding cytoplasmic MurNAc-6-P. Is also able to take up anhydro-N-acetylmuramic acid (anhMurNAc), but cannot phosphorylate the carbon 6, probably because of the 1,6-anhydro ring. This chain is PTS system N-acetylmuramic acid-specific EIIBC component (murP), found in Vibrio cholerae serotype O1 (strain ATCC 39315 / El Tor Inaba N16961).